The following is a 581-amino-acid chain: Glutamyl-tRNA reductase (581 aa).

Substrate-binding positions include 49–52 (TCNR), S109, 114–116 (EGQ), and Q120. C50 functions as the Nucleophile in the catalytic mechanism. 192–197 (GAGSMS) provides a ligand contact to NADP(+). The segment at 292-416 (PAVEDTAVQE…AEAPRPQPVL (125 aa)) is insert.

Belongs to the glutamyl-tRNA reductase family. As to quaternary structure, homodimer.

It carries out the reaction (S)-4-amino-5-oxopentanoate + tRNA(Glu) + NADP(+) = L-glutamyl-tRNA(Glu) + NADPH + H(+). It functions in the pathway porphyrin-containing compound metabolism; protoporphyrin-IX biosynthesis; 5-aminolevulinate from L-glutamyl-tRNA(Glu): step 1/2. In terms of biological role, catalyzes the NADPH-dependent reduction of glutamyl-tRNA(Glu) to glutamate 1-semialdehyde (GSA). The sequence is that of Glutamyl-tRNA reductase from Streptomyces coelicolor (strain ATCC BAA-471 / A3(2) / M145).